The primary structure comprises 297 residues: Putative S-adenosyl-L-methionine-dependent methyltransferase MSMEG_0614/MSMEI_0598 (297 aa).

Residues Asp125 and 154-155 contribute to the S-adenosyl-L-methionine site; that span reads DL.

This sequence belongs to the UPF0677 family.

Functionally, exhibits S-adenosyl-L-methionine-dependent methyltransferase activity. The sequence is that of Putative S-adenosyl-L-methionine-dependent methyltransferase MSMEG_0614/MSMEI_0598 from Mycolicibacterium smegmatis (strain ATCC 700084 / mc(2)155) (Mycobacterium smegmatis).